We begin with the raw amino-acid sequence, 375 residues long: Guanine nucleotide-binding protein subunit beta (375 aa).

WD repeat units lie at residues 63–93, 105–135, 154–185, 202–233, 246–276, 293–323, and 339–369; these read GHTGKVYSLDWTPEKNRIVSASQDGRLIVWN, LPCAWVMTCAFSPSGQSVACGGLDSVCSIYN, GHKGYVSSCQYVPDEDTHLITSSGDQTCVLWD, GHTADVQSVSISSSNPRLFVSGSCDTTARLWD, GHEGDVNTVKFFPDGNRFGTGSEDGTCRLFD, GDIPHVTSMAFSISGRLLFVGYSNGDCYVWD, and SHEGRISCLGLSADGSALCTGSWDTNLKIWA.

It belongs to the WD repeat G protein beta family. As to quaternary structure, g proteins are composed of 3 units, alpha, beta and gamma.

In terms of biological role, guanine nucleotide-binding proteins (G proteins) are involved as a modulator or transducer in various transmembrane signaling systems. The beta and gamma chains are required for the GTPase activity, for replacement of GDP by GTP, and for G protein-effector interaction. The polypeptide is Guanine nucleotide-binding protein subunit beta (Nicotiana tabacum (Common tobacco)).